We begin with the raw amino-acid sequence, 394 residues long: Elongation factor Tu 2 (394 aa).

The 195-residue stretch at 10–204 (KPHVNVGTIG…HLDTYIPEPE (195 aa)) folds into the tr-type G domain. Residues 19 to 26 (GHVDHGKT) form a G1 region. 19–26 (GHVDHGKT) lines the GTP pocket. Thr-26 is a Mg(2+) binding site. The interval 60–64 (GITIN) is G2. The segment at 81–84 (DCPG) is G3. Residues 81-85 (DCPGH) and 136-139 (NKCD) each bind GTP. The tract at residues 136 to 139 (NKCD) is G4. Residues 174 to 176 (SAL) are G5.

The protein belongs to the TRAFAC class translation factor GTPase superfamily. Classic translation factor GTPase family. EF-Tu/EF-1A subfamily. In terms of assembly, monomer.

It localises to the cytoplasm. It carries out the reaction GTP + H2O = GDP + phosphate + H(+). GTP hydrolase that promotes the GTP-dependent binding of aminoacyl-tRNA to the A-site of ribosomes during protein biosynthesis. The polypeptide is Elongation factor Tu 2 (Haemophilus influenzae (strain 86-028NP)).